The primary structure comprises 182 residues: ATP-dependent protease subunit HslV (182 aa).

The active site involves Thr6. Residues Ala164, Cys167, and Thr170 each contribute to the Na(+) site.

The protein belongs to the peptidase T1B family. HslV subfamily. As to quaternary structure, a double ring-shaped homohexamer of HslV is capped on each side by a ring-shaped HslU homohexamer. The assembly of the HslU/HslV complex is dependent on binding of ATP.

The protein resides in the cytoplasm. It catalyses the reaction ATP-dependent cleavage of peptide bonds with broad specificity.. Its activity is regulated as follows. Allosterically activated by HslU binding. In terms of biological role, protease subunit of a proteasome-like degradation complex believed to be a general protein degrading machinery. The polypeptide is ATP-dependent protease subunit HslV (Borreliella afzelii (strain PKo) (Borrelia afzelii)).